The primary structure comprises 688 residues: MSERKIPKEVIEEVERLREEIEYHNYRYYVLNDPVITDEEYDKLMRRLIELERMYPELVTPDSPTQRVGGKVLEGFKTVKHSVPMLSLDNTYNEEEILEFDRRVKKTLQEAEVEYVAELKIDGVSIALRYENGKFVLGATRGDGIEGEDVSENVKTVRSIPLRLRKPVTVEVRGEIYMPVDEFKRLNDEREEEGLPPFANPRNAAAGTLRQLNTALVAARRLDSFIYYVVHPENYGLKTQWEALQFLKELGFKVNPHSKLCKNIQEVIDYWREWEERKKELDYWVDGVVVKVNRFDFQRILGETSKAPRWAIAFKFPAEQARTRVLDVTIQVGRTGVLTPVAELEPVQLAGTIVKRASLHNFEYIREKDIRIGDYVFVEKAGGIIPQIVKSIPELRTGSEKEIKPPDKCPVCGGKVGKLDPEEVALRCLNPHCPAKLKRALRTLVSREALDIEGLGEKLIDRLVDAGLVKDIADIFYLTPFDLAQLGPGIGQRTIAKILQEIEEAKKRPLHKLITGLGIPMVGQKTAKILAEHFKSLEAIADASYETLKDIPGIGPEIAKSIVEYFRNPKTREIIEKLKKAGVKLEERVMKLDILKGLTFAVTGTLKNFTREEIVEFFEKLGAKVVNSVSRNTDYLIVGENPGSKYEKAKMLKVKTMSEEEFLEFVRKRAELKGYNFDEIMRSWKEWS.

Residues 38 to 42 (DEEYD), 87 to 88 (SL), and Glu118 each bind NAD(+). Catalysis depends on Lys120, which acts as the N6-AMP-lysine intermediate. Residues Arg141, Glu175, Lys291, and Lys315 each contribute to the NAD(+) site. Positions 409, 412, 428, and 433 each coordinate Zn(2+). Residues 590-679 (MKLDILKGLT…AELKGYNFDE (90 aa)) enclose the BRCT domain.

This sequence belongs to the NAD-dependent DNA ligase family. LigA subfamily. It depends on Mg(2+) as a cofactor. The cofactor is Mn(2+).

The enzyme catalyses NAD(+) + (deoxyribonucleotide)n-3'-hydroxyl + 5'-phospho-(deoxyribonucleotide)m = (deoxyribonucleotide)n+m + AMP + beta-nicotinamide D-nucleotide.. Functionally, DNA ligase that catalyzes the formation of phosphodiester linkages between 5'-phosphoryl and 3'-hydroxyl groups in double-stranded DNA using NAD as a coenzyme and as the energy source for the reaction. It is essential for DNA replication and repair of damaged DNA. In Thermotoga petrophila (strain ATCC BAA-488 / DSM 13995 / JCM 10881 / RKU-1), this protein is DNA ligase.